A 100-amino-acid chain; its full sequence is MATITDPRDIILAPVISEKSYGLIEDNVYTFVVHPDSNKTQIKIAIEKIFDVKVDSVNTANRQGKRKRTRTGFGKRKSTKRAIVKLAAGSKPIDLFGAPA.

Belongs to the universal ribosomal protein uL23 family. Part of the 50S ribosomal subunit. Contacts protein L29, and trigger factor when it is bound to the ribosome.

In terms of biological role, one of the early assembly proteins it binds 23S rRNA. One of the proteins that surrounds the polypeptide exit tunnel on the outside of the ribosome. Forms the main docking site for trigger factor binding to the ribosome. The protein is Large ribosomal subunit protein uL23 of Mycolicibacterium smegmatis (strain ATCC 700084 / mc(2)155) (Mycobacterium smegmatis).